A 71-amino-acid polypeptide reads, in one-letter code: Sperm-associated antigen 11A (71 aa).

The signal sequence occupies residues 1–19 (MIPRLLPFFASLLFAALLF). Cystine bridges form between cysteine 32–cysteine 61, cysteine 39–cysteine 54, and cysteine 44–cysteine 62.

This sequence belongs to the beta-defensin family.

The protein resides in the secreted. Its function is as follows. Has antimicrobial activity against E.coli. Plays a role in the defense response in the male reproductive tract, contributing to sperm maturation, storage and protection. The chain is Sperm-associated antigen 11A from Mus musculus (Mouse).